A 383-amino-acid chain; its full sequence is 8-amino-7-oxononanoate synthase (383 aa).

Residue Arg20 participates in substrate binding. Residue 107–108 participates in pyridoxal 5'-phosphate binding; sequence GY. A substrate-binding site is contributed by His132. 3 residues coordinate pyridoxal 5'-phosphate: Ser178, His206, and Thr233. An N6-(pyridoxal phosphate)lysine modification is found at Lys236. Residue Thr349 coordinates substrate.

It belongs to the class-II pyridoxal-phosphate-dependent aminotransferase family. BioF subfamily. As to quaternary structure, homodimer. It depends on pyridoxal 5'-phosphate as a cofactor.

It carries out the reaction 6-carboxyhexanoyl-[ACP] + L-alanine + H(+) = (8S)-8-amino-7-oxononanoate + holo-[ACP] + CO2. The protein operates within cofactor biosynthesis; biotin biosynthesis. Functionally, catalyzes the decarboxylative condensation of pimeloyl-[acyl-carrier protein] and L-alanine to produce 8-amino-7-oxononanoate (AON), [acyl-carrier protein], and carbon dioxide. This Chromobacterium violaceum (strain ATCC 12472 / DSM 30191 / JCM 1249 / CCUG 213 / NBRC 12614 / NCIMB 9131 / NCTC 9757 / MK) protein is 8-amino-7-oxononanoate synthase.